The following is a 217-amino-acid chain: Nucleoside diphosphate-linked moiety X motif 6 (217 aa).

In terms of domain architecture, Nudix hydrolase spans 42 to 177 (THQVGVAGAV…VAKLLLYGYN (136 aa)). The Nudix box motif lies at 77–98 (GLSDQGEDIGATAVREVLEETG).

Belongs to the Nudix hydrolase family. As to expression, detected in liver (at protein level).

It localises to the cytoplasm. The protein localises to the nucleus. It is found in the mitochondrion. May contribute to the regulation of cell proliferation. This Xenopus laevis (African clawed frog) protein is Nucleoside diphosphate-linked moiety X motif 6 (nudt6).